The sequence spans 109 residues: Cell division protein ZapA (109 aa).

The stretch at 21-97 (PEQRDALSQA…QTIEQALLDQ (77 aa)) forms a coiled coil.

The protein belongs to the ZapA family. Type 1 subfamily. Homodimer. Interacts with FtsZ.

Its subcellular location is the cytoplasm. Its function is as follows. Activator of cell division through the inhibition of FtsZ GTPase activity, therefore promoting FtsZ assembly into bundles of protofilaments necessary for the formation of the division Z ring. It is recruited early at mid-cell but it is not essential for cell division. This is Cell division protein ZapA from Enterobacter sp. (strain 638).